Reading from the N-terminus, the 156-residue chain is Ribonuclease pancreatic (156 aa).

A signal peptide spans 1–26; it reads MGLEKSLVFFPLLVLLALGWVQPCLG. The substrate site is built by Lys33 and Arg36. His38 acts as the Proton acceptor in catalysis. 4 disulfides stabilise this stretch: Cys54–Cys112, Cys68–Cys123, Cys86–Cys138, and Cys93–Cys100. 69–73 is a substrate binding site; that stretch reads KPVNT. A glycan (N-linked (GlcNAc...) asparagine) is linked at Asn90. 2 residues coordinate substrate: Lys94 and Arg113. Catalysis depends on His147, which acts as the Proton donor.

Belongs to the pancreatic ribonuclease family. As to quaternary structure, monomer. Interacts with and forms tight 1:1 complexes with RNH1. Dimerization of two such complexes may occur. Interaction with RNH1 inhibits this protein. In terms of tissue distribution, pancreas.

It localises to the secreted. The catalysed reaction is an [RNA] containing cytidine + H2O = an [RNA]-3'-cytidine-3'-phosphate + a 5'-hydroxy-ribonucleotide-3'-[RNA].. The enzyme catalyses an [RNA] containing uridine + H2O = an [RNA]-3'-uridine-3'-phosphate + a 5'-hydroxy-ribonucleotide-3'-[RNA].. Its function is as follows. Endonuclease that catalyzes the cleavage of RNA on the 3' side of pyrimidine nucleotides. Acts on single-stranded and double-stranded RNA. The protein is Ribonuclease pancreatic (RNASE1) of Glis glis (Fat dormouse).